The chain runs to 323 residues: o-succinylbenzoate synthase (323 aa).

Lys134 (proton donor) is an active-site residue. The Mg(2+) site is built by Asp162, Glu191, and Asp214. The Proton acceptor role is filled by Lys236.

It belongs to the mandelate racemase/muconate lactonizing enzyme family. MenC type 1 subfamily. The cofactor is a divalent metal cation.

The enzyme catalyses (1R,6R)-6-hydroxy-2-succinyl-cyclohexa-2,4-diene-1-carboxylate = 2-succinylbenzoate + H2O. It participates in quinol/quinone metabolism; 1,4-dihydroxy-2-naphthoate biosynthesis; 1,4-dihydroxy-2-naphthoate from chorismate: step 4/7. Its pathway is quinol/quinone metabolism; menaquinone biosynthesis. Its function is as follows. Converts 2-succinyl-6-hydroxy-2,4-cyclohexadiene-1-carboxylate (SHCHC) to 2-succinylbenzoate (OSB). This chain is o-succinylbenzoate synthase, found in Edwardsiella ictaluri (strain 93-146).